Consider the following 152-residue polypeptide: D-erythrulose-4-phosphate isomerase (152 aa).

Catalysis depends on C67, which acts as the Proton acceptor.

This sequence belongs to the LacAB/RpiB family.

It carries out the reaction D-erythrulose 4-phosphate = D-erythrose 4-phosphate. The protein operates within carbohydrate metabolism. Its function is as follows. Involved in catabolism of D-apiose. Catalyzes the isomerization of D-erythrulose 4-phosphate to D-erythrose 4-phosphate. This Pectobacterium atrosepticum (strain SCRI 1043 / ATCC BAA-672) (Erwinia carotovora subsp. atroseptica) protein is D-erythrulose-4-phosphate isomerase.